Reading from the N-terminus, the 305-residue chain is Ribonuclease BN (305 aa).

Residues histidine 64, histidine 66, aspartate 68, histidine 69, histidine 141, aspartate 212, and histidine 270 each coordinate Zn(2+). Aspartate 68 functions as the Proton acceptor in the catalytic mechanism.

It belongs to the RNase Z family. RNase BN subfamily. Homodimer. It depends on Zn(2+) as a cofactor.

Functionally, zinc phosphodiesterase, which has both exoribonuclease and endoribonuclease activities. This Escherichia coli O127:H6 (strain E2348/69 / EPEC) protein is Ribonuclease BN.